Reading from the N-terminus, the 303-residue chain is Quinolinate synthase (303 aa).

Iminosuccinate is bound by residues histidine 24 and serine 41. Cysteine 86 lines the [4Fe-4S] cluster pocket. Residues 112–114 (YIN) and serine 129 contribute to the iminosuccinate site. Cysteine 172 lines the [4Fe-4S] cluster pocket. Iminosuccinate is bound by residues 198–200 (HPE) and threonine 215. Cysteine 260 contacts [4Fe-4S] cluster.

The protein belongs to the quinolinate synthase family. Type 2 subfamily. Requires [4Fe-4S] cluster as cofactor.

The protein resides in the cytoplasm. It catalyses the reaction iminosuccinate + dihydroxyacetone phosphate = quinolinate + phosphate + 2 H2O + H(+). It functions in the pathway cofactor biosynthesis; NAD(+) biosynthesis; quinolinate from iminoaspartate: step 1/1. Catalyzes the condensation of iminoaspartate with dihydroxyacetone phosphate to form quinolinate. The sequence is that of Quinolinate synthase from Caldicellulosiruptor saccharolyticus (strain ATCC 43494 / DSM 8903 / Tp8T 6331).